The sequence spans 297 residues: uncharacterized protein (297 aa).

Positions 136–174 are disordered; that stretch reads FSETNDDSTDEEIDTPINDDDDDDKNNDADNNDINEDNK. Acidic residues predominate over residues 139-170; the sequence is TNDDSTDEEIDTPINDDDDDDKNNDADNNDIN.

It to S.pombe SpBC725.03.

This is an uncharacterized protein from Saccharomyces cerevisiae (strain ATCC 204508 / S288c) (Baker's yeast).